Here is a 134-residue protein sequence, read N- to C-terminus: Protein Turandot E (134 aa).

The first 38 residues, 1-38 (MSYTRTVHSSTSILKMNSALQISCLLVVLGCLLGSGHC), serve as a signal peptide directing secretion.

Belongs to the Turandot family.

It is found in the secreted. Functionally, a humoral factor that may play a role in stress tolerance. In Drosophila simulans (Fruit fly), this protein is Protein Turandot E.